A 247-amino-acid polypeptide reads, in one-letter code: Probable transcriptional regulatory protein PBPRA1113 (247 aa).

This sequence belongs to the TACO1 family.

It is found in the cytoplasm. This is Probable transcriptional regulatory protein PBPRA1113 from Photobacterium profundum (strain SS9).